The sequence spans 563 residues: Arginine--tRNA ligase (563 aa).

The 'HIGH' region signature appears at 121 to 131; that stretch reads PNIAKPMSMGH.

The protein belongs to the class-I aminoacyl-tRNA synthetase family. As to quaternary structure, monomer.

The protein localises to the cytoplasm. It catalyses the reaction tRNA(Arg) + L-arginine + ATP = L-arginyl-tRNA(Arg) + AMP + diphosphate. This is Arginine--tRNA ligase from Leuconostoc citreum (strain KM20).